The following is a 486-amino-acid chain: MITTEIKRVKNHINGEWVESTGTEVEAVPNPATGKIIAYVPLSPKEDVEKAVEAAKAAFETWSKVPVPNRSRNLYKYLQLLQENKDELAKIITLENGKTLTDATGEVQRGIEAVELATSTPNLMMGQALPNIASGIDGSIWRYPIGVVAGITPFNFPMMIPLWMFPLAIACGNTFVLKTSERTPLLAERLVELFYEAGFPKGVLNLVQGGKDVVNSILENKDIQAVSFVGSEPVARYVYETGTKHGKRVQALAGAKNHAIVMPDCNLEKTVQGVIGSAFASSGERCMACSVVAVVDEIADEFIDVLVAETKKLKVGDGFNEDNYVGPLIRESHKERVLGYINSGVADGATLLVDGRKINEEVGEGYFVGATIFDGVNQEMKIWQDEIFAPVLSIVRVKDLEEGIKLTNQSKFANGAVIYTSNGKHAQTFRDNIDAGMIGVNVNVPAPMAFFAFAGNKASFFGDLGTNGTDGVQFYTRKKVVTERWF.

Positions 154, 178, 181, 182, and 231 each coordinate NAD(+). C286 functions as the Nucleophile in the catalytic mechanism. An NAD(+)-binding site is contributed by E386.

This sequence belongs to the aldehyde dehydrogenase family. IolA subfamily. In terms of assembly, homotetramer.

It carries out the reaction 3-oxopropanoate + NAD(+) + CoA + H2O = hydrogencarbonate + acetyl-CoA + NADH + H(+). The enzyme catalyses 2-methyl-3-oxopropanoate + NAD(+) + CoA + H2O = propanoyl-CoA + hydrogencarbonate + NADH + H(+). The protein operates within polyol metabolism; myo-inositol degradation into acetyl-CoA; acetyl-CoA from myo-inositol: step 7/7. Functionally, catalyzes the oxidation of malonate semialdehyde (MSA) and methylmalonate semialdehyde (MMSA) into acetyl-CoA and propanoyl-CoA, respectively. Is involved in a myo-inositol catabolic pathway. Bicarbonate, and not CO2, is the end-product of the enzymatic reaction. The protein is Malonate-semialdehyde dehydrogenase of Bacillus cereus (strain B4264).